Here is a 619-residue protein sequence, read N- to C-terminus: Sodium-dependent dopamine transporter (619 aa).

The Cytoplasmic segment spans residues 1–56 (MSKSKCSVGPMSSVVAPAKEPNAVGPREVELILVKEQNGVQLTNSTLINPPQTPVE). Residues 57–95 (VQERETWSKKIDFLLSVIGFAVDLANVWRFPYLCYKNGG) traverse the membrane as a discontinuously helical segment. Na(+) is bound by residues G75, A77, V78, D79, and N82. D79 lines the dopamine pocket. Transmembrane regions (helical) follow at residues 96-127 (GAFL…NREG) and 128-171 (AAGV…FSSF). Dopamine contacts are provided by S149 and G153. The Extracellular segment spans residues 172–235 (TMDLPWIHCN…SRGIDDLGPP (64 aa)). A disulfide bridge connects residues C180 and C189. N-linked (GlcNAc...) asparagine glycosylation is found at N181, N188, N196, and N204. A run of 2 helical transmembrane segments spans residues 236–255 (RWQL…FSLW) and 256–286 (KGVK…GVTL). The Extracellular segment spans residues 287–305 (PGAMDGIRAYLSVDFYRLC). Residues 306-334 (EASVWIDAATQVCFSLGVGFGVLIAFSSY) form a discontinuously helical membrane-spanning segment. A chloride-binding site is contributed by Q316. F319 lines the dopamine pocket. 2 residues coordinate Na(+): S320 and N352. Residue S320 coordinates chloride. Residues 335 to 375 (NKFTNNCYRDAIITTSINSLTSFSSGFVVFSFLGYMAQKHN) traverse the membrane as a helical segment. Residue S356 participates in chloride binding. At 376 to 399 (VPIRDVATDGPGLIFIIYPEAIAT) the chain is on the extracellular side. 3 helical membrane-spanning segments follow: residues 400-441 (LPLS…QLLH), 442-465 (RHRE…CVTN), and 466-498 (GGIY…AWFY). L417, D420, and S421 together coordinate Na(+). Dopamine is bound by residues S421 and A422. Residues 499 to 515 (GVQQFSDDIKQMTGQRP) are Cytoplasmic-facing. Residues 516–541 (NLYWRLCWKLVSPCFLLYVVVVSIVT) traverse the membrane as a helical segment. At 542-552 (FRPPHYGAYIF) the chain is on the extracellular side. The helical transmembrane segment at 553 to 582 (PDWANALGWIIATSSMAMVPIYATYKFCSL) threads the bilayer. Positions 560 to 589 (GWIIATSSMAMVPIYATYKFCSLPGSFREK) are interaction with TGFB1I1. Over 583 to 619 (PGSFREKLAYAITPEKDRQLVDRGEVRQFTLRHWLLV) the chain is Cytoplasmic.

It belongs to the sodium:neurotransmitter symporter (SNF) (TC 2.A.22) family. SLC6A3 subfamily. As to quaternary structure, monomer. Homooligomer; disulfide-linked. Interacts with PRKCABP and TGFB1I1. Interacts (via N-terminus) with SYNGR3 (via N-terminus). Interacts with SLC18A2. Interacts with TOR1A (ATP-bound); TOR1A regulates SLC6A3 subcellular location. Interacts with alpha-synuclein/SNCA. Interacts with SEPTIN4. As to expression, found in the substantia nigra and ventral tegmental dopamine neurons, in fibers of the medial forebrain bundle ascending into the striatum, and within dense fiber networks and varicosities in the dorsal and ventral striatum (at protein level). Lower expression in the cortex (at protein level). Absent from the corpus callosum. Expressed throughout the retina at postnatal day 8.

It is found in the cell membrane. Its subcellular location is the cell projection. The protein localises to the neuron projection. The protein resides in the axon. It carries out the reaction dopamine(out) + chloride(out) + Na(+)(out) = dopamine(in) + chloride(in) + Na(+)(in). It catalyses the reaction (R)-noradrenaline(out) + chloride(out) + Na(+)(out) = (R)-noradrenaline(in) + chloride(in) + Na(+)(in). The enzyme catalyses dopamine(out) + chloride(out) + 2 Na(+)(out) = dopamine(in) + chloride(in) + 2 Na(+)(in). Inhibited by amphetamine, bupropion, cocaine and ritalin. Inhibited by zinc ions. Functionally, mediates sodium- and chloride-dependent transport of dopamine. Also mediates sodium- and chloride-dependent transport of norepinephrine (also known as noradrenaline). Regulator of light-dependent retinal hyaloid vessel regression, downstream of OPN5 signaling. This is Sodium-dependent dopamine transporter (Slc6a3) from Mus musculus (Mouse).